Reading from the N-terminus, the 128-residue chain is Large ribosomal subunit protein eL22 (128 aa).

This sequence belongs to the eukaryotic ribosomal protein eL22 family. In terms of assembly, component of the large ribosomal subunit.

The protein localises to the cytoplasm. Component of the large ribosomal subunit. The ribosome is a large ribonucleoprotein complex responsible for the synthesis of proteins in the cell. This chain is Large ribosomal subunit protein eL22 (RPL22), found in Gallus gallus (Chicken).